The chain runs to 215 residues: MASSASKFIKCVTVGDGAVGKTCMLICYTSNKFPTDYIPTVFDNFSANVVVEGTTVNLGLWDTAGQEDYNRLRPLSYRGADVFVLSFSLVSRASYENVFKKWIPELQHFAPGVPLVLVGTKLDLREDKHYLADHPGLSPVTTAQGEELRKLIGATYYIECSSKTQQNVKAVFDSAIKEVIKPLVKQKEKTKKKKKQKSNHGCLSNVLCGRIVTRH.

15-22 (GDGAVGKT) is a GTP binding site. The short motif at 37 to 45 (YIPTVFDNF) is the Effector region element. Residues 62–66 (DTAGQ) and 120–123 (TKLD) contribute to the GTP site. S-palmitoyl cysteine attachment occurs at residues cysteine 202 and cysteine 208.

The protein belongs to the small GTPase superfamily. Rho family. Component of the active ARAC10-IRC5-KIN13A complex. Interacts with ICR5.

It is found in the membrane. The protein resides in the cytoplasm. Its subcellular location is the cytoskeleton. Functionally, involved in local disassembly of cortical microtubules when associated with ICR5 and KIN13A. The protein is Rac-like GTP-binding protein ARAC10 (ARAC10) of Arabidopsis thaliana (Mouse-ear cress).